Reading from the N-terminus, the 478-residue chain is Aspartyl/glutamyl-tRNA(Asn/Gln) amidotransferase subunit B (478 aa).

Belongs to the GatB/GatE family. GatB subfamily. In terms of assembly, heterotrimer of A, B and C subunits.

It carries out the reaction L-glutamyl-tRNA(Gln) + L-glutamine + ATP + H2O = L-glutaminyl-tRNA(Gln) + L-glutamate + ADP + phosphate + H(+). The enzyme catalyses L-aspartyl-tRNA(Asn) + L-glutamine + ATP + H2O = L-asparaginyl-tRNA(Asn) + L-glutamate + ADP + phosphate + 2 H(+). Its function is as follows. Allows the formation of correctly charged Asn-tRNA(Asn) or Gln-tRNA(Gln) through the transamidation of misacylated Asp-tRNA(Asn) or Glu-tRNA(Gln) in organisms which lack either or both of asparaginyl-tRNA or glutaminyl-tRNA synthetases. The reaction takes place in the presence of glutamine and ATP through an activated phospho-Asp-tRNA(Asn) or phospho-Glu-tRNA(Gln). The chain is Aspartyl/glutamyl-tRNA(Asn/Gln) amidotransferase subunit B from Lachnoclostridium phytofermentans (strain ATCC 700394 / DSM 18823 / ISDg) (Clostridium phytofermentans).